A 610-amino-acid polypeptide reads, in one-letter code: Phosphoenolpyruvate carboxykinase [GTP] (610 aa).

Substrate-binding positions include arginine 82 and 221–223 (YGG). 2 residues coordinate Mn(2+): lysine 230 and histidine 250. Serine 272 serves as a coordination point for substrate. Residue 273–278 (ACGKTN) coordinates GTP. Residue cysteine 274 is part of the active site. A Mn(2+)-binding site is contributed by aspartate 297. 387-389 (NSR) is a substrate binding site. GTP-binding positions include arginine 389, arginine 420, and 515-518 (FGDN).

It belongs to the phosphoenolpyruvate carboxykinase [GTP] family. Monomer. It depends on Mn(2+) as a cofactor.

Its subcellular location is the cytoplasm. The enzyme catalyses oxaloacetate + GTP = phosphoenolpyruvate + GDP + CO2. It functions in the pathway carbohydrate biosynthesis; gluconeogenesis. Catalyzes the conversion of oxaloacetate (OAA) to phosphoenolpyruvate (PEP), the rate-limiting step in the metabolic pathway that produces glucose from lactate and other precursors derived from the citric acid cycle. This is Phosphoenolpyruvate carboxykinase [GTP] from Corynebacterium glutamicum (strain R).